The chain runs to 515 residues: 1-pyrroline-5-carboxylate dehydrogenase (515 aa).

Residues Glu286 and Cys320 contribute to the active site.

The protein belongs to the aldehyde dehydrogenase family. RocA subfamily.

The catalysed reaction is L-glutamate 5-semialdehyde + NAD(+) + H2O = L-glutamate + NADH + 2 H(+). It participates in amino-acid degradation; L-proline degradation into L-glutamate; L-glutamate from L-proline: step 2/2. This is 1-pyrroline-5-carboxylate dehydrogenase from Bacillus cereus (strain ATCC 10987 / NRS 248).